Reading from the N-terminus, the 349-residue chain is Transcription factor HBP-1a (349 aa).

Polar residues predominate over residues 1–11 (MGSNDPSTPSK). Disordered stretches follow at residues 1–39 (MGSNDPSTPSKASKPPEQEQPPATTSGTTAPVYPEWPGF), 101–196 (FHYP…NKPM), 224–277 (GATG…QAEC), and 312–349 (NTSLKAKLGESGGGGGSDAVPDMNERGDTNGGSHQKEP). Residues 113–124 (PAGAQGAAPGAA) show a composition bias toward low complexity. Over residues 174–191 (NENGSAQNGVSHSSSHGT) the composition is skewed to polar residues. A bZIP domain is found at 252 to 315 (ELKKQKRKLS…EELLSKNTSL (64 aa)). The segment at 254 to 273 (KKQKRKLSNRESARRSRLRK) is basic motif. A compositionally biased stretch (basic and acidic residues) spans 261–277 (SNRESARRSRLRKQAEC). The leucine-zipper stretch occupies residues 280-315 (LGQRAEALKSENSSLRIELDRIKKEYEELLSKNTSL). Basic and acidic residues predominate over residues 334–349 (MNERGDTNGGSHQKEP).

The protein belongs to the bZIP family. In terms of assembly, binds DNA as a dimer.

The protein localises to the nucleus. Its function is as follows. Binds to the hexamer motif 5'-ACGTCA-3' of histone gene promoters. The chain is Transcription factor HBP-1a from Triticum aestivum (Wheat).